The primary structure comprises 1350 residues: Probable serine/threonine-protein kinase DDB_G0278845 (1350 aa).

8 disordered regions span residues 66–109 (RELN…NNIR), 121–159 (ENGL…PKGL), 179–249 (LANN…LNSI), 270–296 (SSIN…NEYS), 337–396 (NNYN…RDDL), 431–506 (GSTI…EKKK), 525–596 (NDSN…IPTP), and 612–701 (NNNS…NTNE). Positions 84–98 (KYLTSSHSSVVIPQD) are enriched in polar residues. 2 stretches are compositionally biased toward low complexity: residues 127–140 (SPTS…TPTT) and 181–210 (NNNN…NNSN). Over residues 211 to 222 (KISRLINNSNTT) the composition is skewed to polar residues. Residues 223 to 235 (DSNASIRSSNNNN) show a composition bias toward low complexity. Residues 236 to 246 (DDFDNNDDEDL) show a composition bias toward acidic residues. 2 stretches are compositionally biased toward low complexity: residues 270–293 (SSIN…DNVN) and 337–391 (NNYN…GYNN). Residues 431-443 (GSTIFTSTSSDIA) show a composition bias toward polar residues. The span at 454–482 (NENENENENENENENENDNDSDSENENEN) shows a compositional bias: acidic residues. Composition is skewed to low complexity over residues 483 to 495 (DNSI…KSNS) and 525 to 551 (NDSN…PFSP). Polar residues predominate over residues 565-592 (PKPTLQRQRSNSKNVLYSPNASPSNSCK). 3 stretches are compositionally biased toward low complexity: residues 612 to 637 (NNNS…NNID), 645 to 679 (NNNN…NNNN), and 690 to 701 (KKTPNNKINTNE). The 327-residue stretch at 756-1082 (FTLIEKIGEG…VENIKNHIFF (327 aa)) folds into the Protein kinase domain. Residues 762–770 (IGEGGFGQV) and lysine 785 contribute to the ATP site. Aspartate 880 (proton acceptor) is an active-site residue. The AGC-kinase C-terminal domain maps to 1083–1203 (NGVPWGKLHD…PRADDQPLLW (121 aa)). Disordered stretches follow at residues 1129-1159 (SLLP…NDKM), 1190-1219 (GFTY…NNNN), 1232-1285 (NNNN…NKTV), and 1300-1350 (NCNN…KQQQ). The span at 1131-1142 (LPPPLPPPPQTP) shows a compositional bias: pro residues. Composition is skewed to low complexity over residues 1204–1219 (NNNN…NNNN), 1232–1283 (NNNN…SNNK), and 1300–1313 (NCNN…NNIN). Composition is skewed to polar residues over residues 1314–1330 (TGNL…SGEN) and 1338–1350 (PTSP…KQQQ).

This sequence belongs to the protein kinase superfamily. AGC Ser/Thr protein kinase family.

It carries out the reaction L-seryl-[protein] + ATP = O-phospho-L-seryl-[protein] + ADP + H(+). The catalysed reaction is L-threonyl-[protein] + ATP = O-phospho-L-threonyl-[protein] + ADP + H(+). This chain is Probable serine/threonine-protein kinase DDB_G0278845, found in Dictyostelium discoideum (Social amoeba).